A 215-amino-acid chain; its full sequence is Elongation factor Ts (215 aa).

An involved in Mg(2+) ion dislocation from EF-Tu region spans residues 80 to 83; that stretch reads TDFA.

Belongs to the EF-Ts family.

It localises to the cytoplasm. Functionally, associates with the EF-Tu.GDP complex and induces the exchange of GDP to GTP. It remains bound to the aminoacyl-tRNA.EF-Tu.GTP complex up to the GTP hydrolysis stage on the ribosome. This Acetivibrio thermocellus (strain ATCC 27405 / DSM 1237 / JCM 9322 / NBRC 103400 / NCIMB 10682 / NRRL B-4536 / VPI 7372) (Clostridium thermocellum) protein is Elongation factor Ts.